Here is a 312-residue protein sequence, read N- to C-terminus: Mas-related G-protein coupled receptor member B3 (312 aa).

At 1-31 (MALRTSLITTTAPDKTSLPISICIIKFQVMN) the chain is on the extracellular side. A helical membrane pass occupies residues 32-52 (LLSITISPVGMVLNIIVLWFL). The Cytoplasmic segment spans residues 53 to 67 (GFQICRNAFSAYILN). A helical transmembrane segment spans residues 68–88 (LAVADFLFLCSHSIFSFLIVC). The Extracellular portion of the chain corresponds to 89–106 (KLHYFLFYIRQLLDTVTM). The chain crosses the membrane as a helical span at residues 107 to 127 (FAYVFGLSITTIISIECCLSI). Topologically, residues 128-140 (MWPIWYHCQRPRH) are cytoplasmic. A helical membrane pass occupies residues 141–161 (TSAVICVLLWALSLLFPALQM). Residues 162–180 (EKCSVLFNTFEYSWCGIIN) lie on the Extracellular side of the membrane. A helical transmembrane segment spans residues 181 to 201 (IISGAWLVVLFVVLCGFSLIL). Residues 202 to 220 (LLRISCGSQQIPVTRLNVT) are Cytoplasmic-facing. The chain crosses the membrane as a helical span at residues 221–241 (IALRVLLLLIFGIPFGIFWIV). The Extracellular segment spans residues 242 to 259 (DKWNEENFFVRACGFSHH). A helical membrane pass occupies residues 260-280 (ILYVYCINICVNATIYFLVGS). The Cytoplasmic segment spans residues 281–312 (IRHGKFQKMTLKLILQRAIQGTPEEEGGERGP).

Belongs to the G-protein coupled receptor 1 family. Mas subfamily.

It localises to the membrane. Functionally, orphan receptor. Probably involved in the function of nociceptive neurons. May regulate nociceptor function and/or development, including the sensation or modulation of pain. The protein is Mas-related G-protein coupled receptor member B3 (Mrgprb3) of Mus musculus (Mouse).